A 718-amino-acid chain; its full sequence is Quinolinate synthase, chloroplastic (718 aa).

Residues 1-22 (MALALSVAPTSSSLSSLLSRTP) show a composition bias toward low complexity. The tract at residues 1–29 (MALALSVAPTSSSLSSLLSRTPNPSPNFR) is disordered. A chloroplast-targeting transit peptide spans 1-70 (MALALSVAPT…VNASPFSISA (70 aa)). The Cysteine persulfide intermediate role is filled by Cys-132. Residues His-280 and Ser-306 each coordinate iminosuccinate. Cys-360 contributes to the [4Fe-4S] cluster binding site. Residues 389-391 (YIN) and Ser-411 each bind iminosuccinate. Cys-484 contacts [4Fe-4S] cluster. Residues 510–512 (HLE) and Thr-535 contribute to the iminosuccinate site. Cys-640 is a binding site for [4Fe-4S] cluster.

Belongs to the quinolinate synthase family. Type 1 subfamily. Homodimer. Interacts in vitro with NFS2, CpNIFS3 and AO. Part of a Cys defulfurase complex. [4Fe-4S] cluster serves as cofactor. In terms of tissue distribution, expressed in roots, leaves, stems and flowers.

It is found in the plastid. It localises to the chloroplast. It carries out the reaction iminosuccinate + dihydroxyacetone phosphate = quinolinate + phosphate + 2 H2O + H(+). It functions in the pathway cofactor biosynthesis; NAD(+) biosynthesis; quinolinate from iminoaspartate: step 1/1. Catalyzes the condensation of iminoaspartate with dihydroxyacetone phosphate to form quinolinate. Can complement nadA-deficient E.coli mutant. Essential for the de novo synthesis of NAD. Also participates in cysteine desulfurization mediated by NFS2. Can activate the cysteine desulfurase activity of NFS2 in vitro. This chain is Quinolinate synthase, chloroplastic, found in Arabidopsis thaliana (Mouse-ear cress).